The chain runs to 509 residues: Maturase K (509 aa).

The protein belongs to the intron maturase 2 family. MatK subfamily.

Its subcellular location is the plastid. It is found in the chloroplast. Its function is as follows. Usually encoded in the trnK tRNA gene intron. Probably assists in splicing its own and other chloroplast group II introns. The protein is Maturase K of Metasequoia glyptostroboides (Dawn redwood).